Reading from the N-terminus, the 212-residue chain is MTKFSVVVAGGGSTFTPGIVLMLLANQDRFPLRALKFYDNDGARQEVIAEACKVILKEKAPDIAFSYTTDPEVAFSDVDFVMAHIRVGKYPMRELDEKIPLRHGVVGQETCGPGGIAYGMRSIGGVLELVDYMEKYSPNAWMLNYSNPAAIVAEATRRLRPNAKILNICDMPIGIESRMAQIVGLQDRKQMRVRYYGLNHWWSAISRSFRKG.

NAD(+) is bound at residue 4–70 (FSVVVAGGGS…PDIAFSYTTD (67 aa)). 2 residues coordinate Mn(2+): C169 and H200.

It belongs to the glycosyl hydrolase 4 family.

This is Putative inactive 6-phospho-alpha-glucosidase from Escherichia coli (strain K12).